Here is a 204-residue protein sequence, read N- to C-terminus: Holliday junction branch migration complex subunit RuvA (204 aa).

The domain I stretch occupies residues 1-64; the sequence is MFAFLRGELV…EDLQQLFGFL (64 aa). The interval 65-143 is domain II; that stretch reads DEEELQLFRL…KIQPTSSAKA (79 aa). Positions 144–151 are flexible linker; it reads GAPSAVLS. Positions 151 to 204 are domain III; the sequence is SATQLIDDAVAALTTLGFPKASAQKAVSKVLETTPGLSVEELVRTSLAAMHNNL.

This sequence belongs to the RuvA family. In terms of assembly, homotetramer. Forms an RuvA(8)-RuvB(12)-Holliday junction (HJ) complex. HJ DNA is sandwiched between 2 RuvA tetramers; dsDNA enters through RuvA and exits via RuvB. An RuvB hexamer assembles on each DNA strand where it exits the tetramer. Each RuvB hexamer is contacted by two RuvA subunits (via domain III) on 2 adjacent RuvB subunits; this complex drives branch migration. In the full resolvosome a probable DNA-RuvA(4)-RuvB(12)-RuvC(2) complex forms which resolves the HJ.

Its subcellular location is the cytoplasm. Functionally, the RuvA-RuvB-RuvC complex processes Holliday junction (HJ) DNA during genetic recombination and DNA repair, while the RuvA-RuvB complex plays an important role in the rescue of blocked DNA replication forks via replication fork reversal (RFR). RuvA specifically binds to HJ cruciform DNA, conferring on it an open structure. The RuvB hexamer acts as an ATP-dependent pump, pulling dsDNA into and through the RuvAB complex. HJ branch migration allows RuvC to scan DNA until it finds its consensus sequence, where it cleaves and resolves the cruciform DNA. This is Holliday junction branch migration complex subunit RuvA from Chlorobaculum parvum (strain DSM 263 / NCIMB 8327) (Chlorobium vibrioforme subsp. thiosulfatophilum).